The chain runs to 462 residues: tRNA modification GTPase MnmE (462 aa).

(6S)-5-formyl-5,6,7,8-tetrahydrofolate contacts are provided by Arg22, Glu87, and Arg126. The TrmE-type G domain occupies 220-382 (GLKVAIVGRP…LARKVQEIVL (163 aa)). Asn230 provides a ligand contact to K(+). GTP contacts are provided by residues 230 to 235 (NVGKSS), 249 to 255 (SNIPGTT), and 274 to 277 (DTAG). Ser234 serves as a coordination point for Mg(2+). 3 residues coordinate K(+): Ser249, Ile251, and Thr254. Residue Thr255 coordinates Mg(2+). Position 462 (Lys462) interacts with (6S)-5-formyl-5,6,7,8-tetrahydrofolate.

This sequence belongs to the TRAFAC class TrmE-Era-EngA-EngB-Septin-like GTPase superfamily. TrmE GTPase family. As to quaternary structure, homodimer. Heterotetramer of two MnmE and two MnmG subunits. K(+) is required as a cofactor.

It localises to the cytoplasm. Functionally, exhibits a very high intrinsic GTPase hydrolysis rate. Involved in the addition of a carboxymethylaminomethyl (cmnm) group at the wobble position (U34) of certain tRNAs, forming tRNA-cmnm(5)s(2)U34. In Moorella thermoacetica (strain ATCC 39073 / JCM 9320), this protein is tRNA modification GTPase MnmE.